We begin with the raw amino-acid sequence, 449 residues long: UNC93-like protein MFSD11 (449 aa).

Residues 8-28 form a helical membrane-spanning segment; that stretch reads LFNIVILGVAFMFMFTAFQTC. Asn-40 is a glycosylation site (N-linked (GlcNAc...) asparagine). Helical transmembrane passes span 53–73, 74–94, 96–116, 138–158, and 170–190; these read AIIY…VAIV, GPQI…AVFI, PFPW…AVLW, IFWA…YFAW, and RTVF…FFLI. At Ser-204 the chain carries Phosphoserine. 6 consecutive transmembrane segments (helical) span residues 239–259, 277–297, 309–329, 359–379, 385–405, and 410–430; these read MLLL…FSGV, LIGL…SLFG, PVVL…FLNM, FLLG…LGFL, APAF…AFFY, and LLHW…ISFF.

This sequence belongs to the unc-93 family. Widely expressed.

It localises to the membrane. The chain is UNC93-like protein MFSD11 (Mfsd11) from Mus musculus (Mouse).